A 258-amino-acid polypeptide reads, in one-letter code: UPF0246 protein YaaA (258 aa).

Belongs to the UPF0246 family.

This Escherichia coli O7:K1 (strain IAI39 / ExPEC) protein is UPF0246 protein YaaA.